We begin with the raw amino-acid sequence, 318 residues long: Ribosomal RNA small subunit methyltransferase H (318 aa).

S-adenosyl-L-methionine-binding positions include 35-37, D55, F84, D105, and Q112; that span reads AGH. The tract at residues 294-318 is disordered; the sequence is SDSELSENNRSRSAKLRIAEKIKSR.

The protein belongs to the methyltransferase superfamily. RsmH family.

It is found in the cytoplasm. It carries out the reaction cytidine(1402) in 16S rRNA + S-adenosyl-L-methionine = N(4)-methylcytidine(1402) in 16S rRNA + S-adenosyl-L-homocysteine + H(+). Functionally, specifically methylates the N4 position of cytidine in position 1402 (C1402) of 16S rRNA. This is Ribosomal RNA small subunit methyltransferase H from Enterococcus faecalis (strain ATCC 700802 / V583).